Reading from the N-terminus, the 130-residue chain is MAMVSEFLKQAWFMDNQEQECIKSSKGGSSVQSRPNFDPSADVSALDKAITVKGVDEATIIDILTKRTNAQRQQIKAAYQQAKGKSLEEDLKKVLKSHLEDVVVALLKTPAQFDAEELRASMKGLGTDRR.

Q19 participates in a covalent cross-link: Isoglutamyl lysine isopeptide (Gln-Lys) (interchain with K-?). Position 24 is a phosphoserine; by PKC (S24). 2 Annexin repeats span residues 37–108 (FDPS…ALLK) and 109–130 (TPAQ…TDRR). Ca(2+)-binding residues include G54, V55, E57, K92, L95, E100, M122, G124, G126, T127, and R130.

It belongs to the annexin family.

Its subcellular location is the nucleus. The protein localises to the cytoplasm. It localises to the cell projection. The protein resides in the cilium. It is found in the basolateral cell membrane. Its subcellular location is the lateral cell membrane. The protein localises to the cell membrane. It localises to the apical cell membrane. The protein resides in the membrane. It is found in the early endosome. Its subcellular location is the cytoplasmic vesicle membrane. The protein localises to the endosome membrane. It localises to the secreted. The protein resides in the extracellular space. It is found in the extracellular exosome. Its subcellular location is the cytoplasmic vesicle. The protein localises to the secretory vesicle lumen. It localises to the phagocytic cup. Plays important roles in the innate immune response as effector of glucocorticoid-mediated responses and regulator of the inflammatory process. Has anti-inflammatory activity. Plays a role in glucocorticoid-mediated down-regulation of the early phase of the inflammatory response. Promotes resolution of inflammation and wound healing. Functions at least in part by activating the formyl peptide receptors and downstream signaling cascades. Promotes chemotaxis of granulocytes and monocytes via activation of the formyl peptide receptors. Contributes to the adaptive immune response by enhancing signaling cascades that are triggered by T-cell activation, regulates differentiation and proliferation of activated T-cells. Promotes the differentiation of T-cells into Th1 cells and negatively regulates differentiation into Th2 cells. Has no effect on unstimulated T-cells. Promotes rearrangement of the actin cytoskeleton, cell polarization and cell migration. Negatively regulates hormone exocytosis via activation of the formyl peptide receptors and reorganization of the actin cytoskeleton. Has high affinity for Ca(2+) and can bind up to eight Ca(2+) ions. Displays Ca(2+)-dependent binding to phospholipid membranes. Plays a role in the formation of phagocytic cups and phagosomes. Plays a role in phagocytosis by mediating the Ca(2+)-dependent interaction between phagosomes and the actin cytoskeleton. The polypeptide is Annexin A1 (ANXA1) (Gallus gallus (Chicken)).